The primary structure comprises 526 residues: NAD(P)H-quinone oxidoreductase subunit 2 (526 aa).

Helical transmembrane passes span 16 to 36 (ILPEGIVVITLLVVLVGDLIL), 43 to 63 (WTPYAAIVGLLGAIVALYTQW), 80 to 100 (LSIAFRGIIAISAITTILMSV), 110 to 130 (LGEFICILLTATLGAMFLSGA), 133 to 153 (LVMIFISLETLSISSYLLTGY), 168 to 188 (LLIGAASSAIFLYGISLLYGL), 212 to 232 (LALVIALVFAIAGISFKISAV), 246 to 266 (PTPVVAFLSVGSKAAGFALAI), 280 to 300 (WHFVFTALAILSMVLGNVVAL), 308 to 328 (LLAYSSIGQAGFVMIGLLANT), 336 to 356 (IFYLLVYLFMNLGGFTCVILF), 380 to 400 (LGLSLCLLSLGGIPPLAGFFG), 402 to 422 (IYLFWAGWQAGLYWLVLLGLI), and 468 to 488 (VGLILSVLATSLAGILSNPLF).

It belongs to the complex I subunit 2 family. In terms of assembly, NDH-1 can be composed of about 15 different subunits; different subcomplexes with different compositions have been identified which probably have different functions.

The protein resides in the cellular thylakoid membrane. The catalysed reaction is a plastoquinone + NADH + (n+1) H(+)(in) = a plastoquinol + NAD(+) + n H(+)(out). It catalyses the reaction a plastoquinone + NADPH + (n+1) H(+)(in) = a plastoquinol + NADP(+) + n H(+)(out). Functionally, NDH-1 shuttles electrons from an unknown electron donor, via FMN and iron-sulfur (Fe-S) centers, to quinones in the respiratory and/or the photosynthetic chain. The immediate electron acceptor for the enzyme in this species is believed to be plastoquinone. Couples the redox reaction to proton translocation, and thus conserves the redox energy in a proton gradient. Cyanobacterial NDH-1 also plays a role in inorganic carbon-concentration. The protein is NAD(P)H-quinone oxidoreductase subunit 2 of Trichodesmium erythraeum (strain IMS101).